The following is a 52-amino-acid chain: UPF0057 membrane protein YqaE (52 aa).

The next 2 membrane-spanning stretches (helical) occupy residues 1–21 (MGFWRIVITIILPPLGVLLGK) and 23–43 (FGWAFIINILLTLLGYIPGLI).

The protein belongs to the UPF0057 (PMP3) family.

It is found in the cell membrane. This Escherichia coli O157:H7 protein is UPF0057 membrane protein YqaE (yqaE).